A 279-amino-acid polypeptide reads, in one-letter code: Hydroxyethylthiazole kinase (279 aa).

Methionine 58 contributes to the substrate binding site. The ATP site is built by lysine 134 and threonine 180. Residue glycine 207 participates in substrate binding.

It belongs to the Thz kinase family. The cofactor is Mg(2+).

It carries out the reaction 5-(2-hydroxyethyl)-4-methylthiazole + ATP = 4-methyl-5-(2-phosphooxyethyl)-thiazole + ADP + H(+). It functions in the pathway cofactor biosynthesis; thiamine diphosphate biosynthesis; 4-methyl-5-(2-phosphoethyl)-thiazole from 5-(2-hydroxyethyl)-4-methylthiazole: step 1/1. Its function is as follows. Catalyzes the phosphorylation of the hydroxyl group of 4-methyl-5-beta-hydroxyethylthiazole (THZ). The sequence is that of Hydroxyethylthiazole kinase from Methanoculleus marisnigri (strain ATCC 35101 / DSM 1498 / JR1).